The primary structure comprises 911 residues: Protein translocase subunit SecA (911 aa).

ATP contacts are provided by residues Q87, 105–109 (GEGKT), and D512. The tract at residues 861–893 (APGLESEQLSEEGAEVAVASAPVRNDQKLGRNE) is disordered. Positions 895, 897, 906, and 907 each coordinate Zn(2+).

Belongs to the SecA family. As to quaternary structure, monomer and homodimer. Part of the essential Sec protein translocation apparatus which comprises SecA, SecYEG and auxiliary proteins SecDF-YajC and YidC. The cofactor is Zn(2+).

It localises to the cell inner membrane. It is found in the cytoplasm. The catalysed reaction is ATP + H2O + cellular proteinSide 1 = ADP + phosphate + cellular proteinSide 2.. Part of the Sec protein translocase complex. Interacts with the SecYEG preprotein conducting channel. Has a central role in coupling the hydrolysis of ATP to the transfer of proteins into and across the cell membrane, serving both as a receptor for the preprotein-SecB complex and as an ATP-driven molecular motor driving the stepwise translocation of polypeptide chains across the membrane. This chain is Protein translocase subunit SecA, found in Pseudomonas putida (strain ATCC 700007 / DSM 6899 / JCM 31910 / BCRC 17059 / LMG 24140 / F1).